We begin with the raw amino-acid sequence, 472 residues long: Adenosylhomocysteinase (472 aa).

T61, D136, and E196 together coordinate substrate. Residue 197-199 (TTT) coordinates NAD(+). Positions 226 and 230 each coordinate substrate. NAD(+) contacts are provided by residues N231, 260-265 (GYGDVG), E283, N318, 339-341 (IGH), and N384.

It belongs to the adenosylhomocysteinase family. NAD(+) serves as cofactor.

It localises to the cytoplasm. It catalyses the reaction S-adenosyl-L-homocysteine + H2O = L-homocysteine + adenosine. The protein operates within amino-acid biosynthesis; L-homocysteine biosynthesis; L-homocysteine from S-adenosyl-L-homocysteine: step 1/1. May play a key role in the regulation of the intracellular concentration of adenosylhomocysteine. This Cupriavidus metallidurans (strain ATCC 43123 / DSM 2839 / NBRC 102507 / CH34) (Ralstonia metallidurans) protein is Adenosylhomocysteinase.